Consider the following 55-residue polypeptide: Riparin-1.5 acid (55 aa).

The signal sequence occupies residues 1–15 (MKIIVFLAVLMLVSA). Residues 16-41 (QVCLVSAAEMEHSSDNELSSRDLVKR) constitute a propeptide that is removed on maturation. Cys-47 and Cys-53 are joined by a disulfide. Positions 54–55 (NH) are excised as a propeptide.

In terms of tissue distribution, expressed by the skin glands.

It is found in the secreted. The protein is Riparin-1.5 acid of Crinia riparia (Streambank froglet).